A 297-amino-acid chain; its full sequence is Thiosulfate sulfurtransferase (297 aa).

Residue lysine 14 is modified to N6-acetyllysine; alternate. Lysine 14 carries the post-translational modification N6-succinyllysine; alternate. In terms of domain architecture, Rhodanese 1 spans 25-143 (LGPSLRVLDA…WLKEGHPVTS (119 aa)). Serine 35 is a glycosylation site (O-linked (GlcNAc) serine). Serine 38 is modified (phosphoserine). At lysine 136 the chain carries N6-acetyllysine; alternate. Lysine 136 carries the post-translational modification N6-succinyllysine; alternate. The segment at 144–159 (EPSRPEPAVFKATLNL) is hinge. At lysine 163 the chain carries N6-acetyllysine. In terms of domain architecture, Rhodanese 2 spans 173 to 288 (QSKRFQLVDS…WFRRAPPETR (116 aa)). Residue lysine 175 is modified to N6-acetyllysine; alternate. The residue at position 175 (lysine 175) is an N6-succinyllysine; alternate. Arginine 187 contacts substrate. Residues lysine 219 and lysine 224 each carry the N6-acetyllysine; alternate modification. N6-succinyllysine; alternate is present on residues lysine 219 and lysine 224. Lysine 236 is subject to N6-acetyllysine. At lysine 237 the chain carries N6-acetyllysine; alternate. N6-succinyllysine; alternate is present on lysine 237. The active-site Cysteine persulfide intermediate is cysteine 248. Lysine 250 provides a ligand contact to substrate.

In terms of assembly, monomer. Expressed in numerous tissues.

The protein localises to the mitochondrion matrix. It carries out the reaction thiosulfate + hydrogen cyanide = thiocyanate + sulfite + 2 H(+). Its function is as follows. Together with MRPL18, acts as a mitochondrial import factor for the cytosolic 5S rRNA. Only the nascent unfolded cytoplasmic form is able to bind to the 5S rRNA. Formation of iron-sulfur complexes and cyanide detoxification. The polypeptide is Thiosulfate sulfurtransferase (Tst) (Mus musculus (Mouse)).